The chain runs to 1390 residues: DNA-directed RNA polymerase subunit beta (1390 aa).

The protein belongs to the RNA polymerase beta chain family. The RNAP catalytic core consists of 2 alpha, 1 beta, 1 beta' and 1 omega subunit. When a sigma factor is associated with the core the holoenzyme is formed, which can initiate transcription.

The enzyme catalyses RNA(n) + a ribonucleoside 5'-triphosphate = RNA(n+1) + diphosphate. DNA-dependent RNA polymerase catalyzes the transcription of DNA into RNA using the four ribonucleoside triphosphates as substrates. The polypeptide is DNA-directed RNA polymerase subunit beta (Methylobacillus flagellatus (strain ATCC 51484 / DSM 6875 / VKM B-1610 / KT)).